The following is a 357-amino-acid chain: DNA polymerase IV (357 aa).

The UmuC domain maps to 4–185; sequence IIHVDMDCYF…LSLRQIPGVG (182 aa). Asp-8 and Asp-103 together coordinate Mg(2+). Glu-104 is an active-site residue.

It belongs to the DNA polymerase type-Y family. In terms of assembly, monomer. Mg(2+) serves as cofactor.

It is found in the cytoplasm. It carries out the reaction DNA(n) + a 2'-deoxyribonucleoside 5'-triphosphate = DNA(n+1) + diphosphate. Its function is as follows. Poorly processive, error-prone DNA polymerase involved in untargeted mutagenesis. Copies undamaged DNA at stalled replication forks, which arise in vivo from mismatched or misaligned primer ends. These misaligned primers can be extended by PolIV. Exhibits no 3'-5' exonuclease (proofreading) activity. May be involved in translesional synthesis, in conjunction with the beta clamp from PolIII. This is DNA polymerase IV from Shewanella oneidensis (strain ATCC 700550 / JCM 31522 / CIP 106686 / LMG 19005 / NCIMB 14063 / MR-1).